The following is a 442-amino-acid chain: Cytochrome c biogenesis CcmF C-terminal-like mitochondrial protein (442 aa).

3 helical membrane-spanning segments follow: residues 6–26 (NFFF…PVLL), 39–59 (PFFN…LVYL), and 122–142 (YLES…FFLA). Residues 151–175 (RARRRKGQTLRPNGNEQRRNDKMRC) form a disordered region. Residues 166-175 (EQRRNDKMRC) are compositionally biased toward basic and acidic residues. A helical membrane pass occupies residues 411–431 (FIFFIWIGFMLASLGGLPSLL).

It belongs to the CcmF/CycK/Ccl1/NrfE/CcsA family. In terms of assembly, interacts with CCMFN2.

The protein localises to the mitochondrion inner membrane. In terms of biological role, forms a complex with CCMFN1, CCMFN2 and CCMH that performs the assembly of heme with c-type apocytochromes in mitochondria. The chain is Cytochrome c biogenesis CcmF C-terminal-like mitochondrial protein (CCMFC) from Arabidopsis thaliana (Mouse-ear cress).